Reading from the N-terminus, the 443-residue chain is Thymidine phosphorylase (443 aa).

It belongs to the thymidine/pyrimidine-nucleoside phosphorylase family. In terms of assembly, homodimer.

The catalysed reaction is thymidine + phosphate = 2-deoxy-alpha-D-ribose 1-phosphate + thymine. The protein operates within pyrimidine metabolism; dTMP biosynthesis via salvage pathway; dTMP from thymine: step 1/2. Functionally, the enzymes which catalyze the reversible phosphorolysis of pyrimidine nucleosides are involved in the degradation of these compounds and in their utilization as carbon and energy sources, or in the rescue of pyrimidine bases for nucleotide synthesis. This chain is Thymidine phosphorylase, found in Shewanella baltica (strain OS185).